The following is a 1173-amino-acid chain: BRCA2-interacting transcriptional repressor EMSY (1173 aa).

Residues 16–100 enclose the ENT domain; sequence CKRILRKLEL…EWSIEGRRLV (85 aa). A compositionally biased stretch (low complexity) spans 149–177; that stretch reads STTSTPPSASAPSSSSAAVKSPRPASPAS. Disordered stretches follow at residues 149-179, 191-216, 676-720, 797-816, 905-998, 1020-1046, and 1139-1173; these read STTS…ASNV, KSVS…SSPV, NRSA…DAPP, SAEQ…ESDA, RVCE…GAQV, PRAP…EKPS, and DYTS…DQSQ. Low complexity predominate over residues 683–693; the sequence is TTSTHTSAAAA. Low complexity-rich tracts occupy residues 911 to 921 and 937 to 953; these read SSSSSSSSSSS and SSSS…TPHT. Polar residues-rich tracts occupy residues 961-976 and 989-998; these read QAPT…TQLS and SSKTSSGAQV. Low complexity predominate over residues 1025–1040; that stretch reads SSSSSSEAALKLQAES. Acidic residues predominate over residues 1148 to 1159; the sequence is EQAMEQEVDSSN.

In terms of assembly, homodimer.

The protein resides in the nucleus. In terms of biological role, regulator which is able to repress transcription, possibly via its interaction with a multiprotein chromatin remodeling complex that modifies the chromatin. This is BRCA2-interacting transcriptional repressor EMSY from Danio rerio (Zebrafish).